The following is a 130-amino-acid chain: Small ribosomal subunit protein uS11c (130 aa).

It belongs to the universal ribosomal protein uS11 family. As to quaternary structure, part of the 30S ribosomal subunit.

The protein localises to the plastid. It is found in the chloroplast. The chain is Small ribosomal subunit protein uS11c from Spirogyra maxima (Green alga).